The chain runs to 187 residues: PBAN-type neuropeptides (187 aa).

An N-terminal signal peptide occupies residues 1 to 22 (MSRFYFFFNLICLYLAIKSALS). The propeptide occupies 23 to 64 (AELDTNDQKYADLRTTGRGESPDSTGPDSDTLRRDDGAEGLN). Residues 34 to 43 (DLRTTGRGES) are compositionally biased toward basic and acidic residues. The interval 34-58 (DLRTTGRGESPDSTGPDSDTLRRDD) is disordered. Leu-76 carries the post-translational modification Leucine amide. Residues 80 to 127 (TIAADLHDDLVEEFDAEPLGYAGEPPQKLATELVQGAPYMVLLVTAKP) constitute a propeptide that is removed on maturation. Residues 132 to 163 (PIFYHTTSPRLGRRDSVGENHQRPPFAPRLGR) form a disordered region. Leu-142 is modified (leucine amide). Basic and acidic residues predominate over residues 143–153 (GRRDSVGENHQ). Leucine amide is present on residues Leu-161 and Leu-171. The propeptide occupies 174–187 (SYNGGYPLPFQFAY).

This sequence belongs to the pyrokinin family.

It localises to the secreted. A hormone that controls sex pheromone production in females and pheromone responsiveness in male. Also mediates visceral muscle contractile activity (myotropic activity). The sequence is that of PBAN-type neuropeptides from Anopheles gambiae (African malaria mosquito).